The primary structure comprises 692 residues: MKLLILAVAISLAVLASGSYVPSTKFEAKYADKEFLFKQKFFFEVLRNIHLPLKYDEYIPYTKTWVSDETKYNDFAQVAEFFDYYKTGAFLEKGELFSIYNEQYLRQTYAVFTFLYNSADWDTYYKNMIWARDNINEGMFIYVLHLTVMHRPDLQGIVLPAIYEIYPYYFFNTDVIRTINYKKLYDPKFGFYGNGKYNVVYANYTATYPMDYYNNFYTEEYLNYYTEDIGLNACYYYFMMDYSFLLGGDKFGLIKDRRGELYWYMHQMLLARYNLERMSNYMGTVKPLVWRFPLKTGYFSLLSYWNGVPFKSRDYNYMISDESYFKLDWINAWEAKIRKIIEDGFFVKEDGTRINLRLPESVEFFGNLLNSNVDSVDANYVGYIEVFSRLLLSGNDFNAYKVWPSALMQFETSLRDPVFYQLYERFMDLYYYFKRFLPSYTYEELNFNGVVIKDVTFDKLMTYFDYFDSDVSNVLPMQSTDKYFDYAVFARQRRLNHKPFSYTMNVMSDYTGKAIIRAFVGPKFDRFFDLQFYKKYFFEIDQYLVDFTAGKNTFVRNSRDFYWSVKDRTMYTDLYKKIMLGYNGQEKFALDMSEAHCGFPDRLILPKGWTSGMPMQFYFIITPYTAKTYEQGYQYDKTFTCGVESGMRFYDSLPFGYPFDRVINFNYFYTKNMYFKDVFIFHTEEMKMNQRY.

The first 18 residues, 1–18 (MKLLILAVAISLAVLASG), serve as a signal peptide directing secretion. N-linked (GlcNAc...) asparagine glycosylation is present at Asn-203.

It belongs to the hemocyanin family. Homohexamer. Larval fat body.

The protein localises to the secreted. It localises to the extracellular space. Functionally, larval storage protein (LSP) which may serve as a store of amino acids for synthesis of adult proteins. In Anopheles gambiae (African malaria mosquito), this protein is Hexamerin-1.1 (HexA).